Consider the following 502-residue polypeptide: Lysine--tRNA ligase (502 aa).

Residues E411 and E418 each coordinate Mg(2+).

It belongs to the class-II aminoacyl-tRNA synthetase family. In terms of assembly, homodimer. Mg(2+) is required as a cofactor.

It localises to the cytoplasm. The catalysed reaction is tRNA(Lys) + L-lysine + ATP = L-lysyl-tRNA(Lys) + AMP + diphosphate. In Clostridium tetani (strain Massachusetts / E88), this protein is Lysine--tRNA ligase.